An 853-amino-acid polypeptide reads, in one-letter code: MLSQYDEQLAAGDNNGFNKQGNATLYSFDFVDADDFLDSISGALPNNGHNNVNPNTNDISFEDMNIMNPNIYSPVSAASGDDFTQSSGQPMISEGSNYTGQNFTDYLSDNSLEGYDKNTSRPLHEVDIGFSNKRSNSTSTGSLSHNEEITPISHYSVDSIVTSPEPPINKQGDFPPIKRTTTVSSTNSITNTTKKPAKVTKPKSKDKNSHNMIEKKYRTNINTKILALRDAVPALRIAAGCDDVSIADLEGLTPASKLNKASVLTKATEYIKHLESKNFILKQQNIELHRLIQHANMNPKSLPPPPQQMQAPPQPGFGFYPPQNQSFNVTPASQYPSPQQQVSPTQQQTVHHPPQPNRYLLGGMAAVMGTSLFGGSGENDFRSLSALPFSYLFPNAILNPSPLTIQLWTLTKVLLVVGSLASIFIPMYKQAQLKKEDKPNTIPETSLLDWILISIGFKTPAKLSVSKRDAIISNLQGGNDWSQLVSDYFYLAGCEINFENCFLSLVLGTIIRHRFPVVATILNHYLSMKEALLLNLDYKGFSKSLIRLNQLISKVDGVSIFESTNLTTRLTNVFTNNRINANIVDGQNHVKYIEFYQRNINDYYAIVFNWRLLEFIHELNVTYLEQLNDDQSQVLTDLKIIEAFFGEQDNKLFGYYQLFTSILNANYAPYLFESLKDKVESSLEKFRIAYEGIDLTDHEIHNTSSEDEYEQESPVVYKYEPTLKSQKSLISSLNLVNEEEFIILTCSLTIYYYKNKEYDRALKLLNYLRLDNDSKTLSLLTFTSLITLINELIPGKIEDNVNLDSAIRICRDWLENPDLTQYMDEDIKLELKKIVVTKGMIVNGIDVNESDEE.

2 disordered regions span residues 165-209 (EPPI…DKNS) and 296-353 (NMNP…VHHP). A compositionally biased stretch (low complexity) spans 180–194 (TTTVSSTNSITNTTK). The bHLH domain maps to 205-274 (KDKNSHNMIE…TKATEYIKHL (70 aa)). Residues 301–315 (SLPPPPQQMQAPPQP) are compositionally biased toward pro residues. A compositionally biased stretch (low complexity) spans 330-352 (TPASQYPSPQQQVSPTQQQTVHH).

The protein localises to the nucleus. Its function is as follows. Transcription factor that positively controls filamentous growth, virulence, and invasiveness. Binds directly to the two SRE-1-like elements upstream of TEC1 and thus positively regulates expression of this important hyphal growth regulator. Functions independently of known signaling cascades involving EFG1. Also regulates gene expression during intestinal colonization but is not involved in host cell adhesion. This is Transcription factor CPH2 (CPH2) from Candida albicans (strain SC5314 / ATCC MYA-2876) (Yeast).